Consider the following 248-residue polypeptide: Ribosomal RNA small subunit methyltransferase J (248 aa).

S-adenosyl-L-methionine contacts are provided by residues 101–102 (RD), 117–118 (ER), 153–154 (SS), and Asp171.

It belongs to the methyltransferase superfamily. RsmJ family.

It is found in the cytoplasm. It catalyses the reaction guanosine(1516) in 16S rRNA + S-adenosyl-L-methionine = N(2)-methylguanosine(1516) in 16S rRNA + S-adenosyl-L-homocysteine + H(+). In terms of biological role, specifically methylates the guanosine in position 1516 of 16S rRNA. This chain is Ribosomal RNA small subunit methyltransferase J, found in Proteus mirabilis (strain HI4320).